The following is a 241-amino-acid chain: 3-deoxy-D-manno-octulosonic acid kinase (241 aa).

Residue Asp171 is part of the active site.

The protein belongs to the protein kinase superfamily. KdkA/RfaP family.

The protein resides in the cell inner membrane. The enzyme catalyses an alpha-Kdo-(2-&gt;6)-lipid IVA + ATP = a 4-O-phospho-alpha-Kdo-(2-&gt;6)-lipid IVA + ADP + H(+). It functions in the pathway bacterial outer membrane biogenesis; LPS core biosynthesis. Functionally, catalyzes the ATP-dependent phosphorylation of the 3-deoxy-D-manno-octulosonic acid (Kdo) residue in Kdo-lipid IV(A) at the 4-OH position. This Haemophilus influenzae (strain 86-028NP) protein is 3-deoxy-D-manno-octulosonic acid kinase.